The primary structure comprises 709 residues: Phosphomethylpyrimidine synthase (709 aa).

Over residues 1-13 (MNIRSNPDTTLPA) the composition is skewed to polar residues. Disordered regions lie at residues 1 to 21 (MNIR…PLPS) and 125 to 168 (DAPA…GREQ). Substrate is bound by residues N274, M303, Y332, H368, 388-390 (SRG), 429-432 (DGLR), and E468. Residue H472 coordinates Zn(2+). A substrate-binding site is contributed by Y495. H536 is a binding site for Zn(2+). [4Fe-4S] cluster-binding residues include C616, C619, and C624.

The protein belongs to the ThiC family. Homodimer. Requires [4Fe-4S] cluster as cofactor.

The enzyme catalyses 5-amino-1-(5-phospho-beta-D-ribosyl)imidazole + S-adenosyl-L-methionine = 4-amino-2-methyl-5-(phosphooxymethyl)pyrimidine + CO + 5'-deoxyadenosine + formate + L-methionine + 3 H(+). Its pathway is cofactor biosynthesis; thiamine diphosphate biosynthesis. Its function is as follows. Catalyzes the synthesis of the hydroxymethylpyrimidine phosphate (HMP-P) moiety of thiamine from aminoimidazole ribotide (AIR) in a radical S-adenosyl-L-methionine (SAM)-dependent reaction. This chain is Phosphomethylpyrimidine synthase, found in Rhodopseudomonas palustris (strain BisB18).